A 192-amino-acid chain; its full sequence is GTP cyclohydrolase-2 (192 aa).

50 to 54 (RLHSE) provides a ligand contact to GTP. Zn(2+)-binding residues include C55, C66, and C68. Residues 92-94 (EGR) and T114 contribute to the GTP site. D126 functions as the Proton acceptor in the catalytic mechanism. R128 serves as the catalytic Nucleophile. GTP-binding residues include T149 and K154.

Belongs to the GTP cyclohydrolase II family. Zn(2+) serves as cofactor.

It carries out the reaction GTP + 4 H2O = 2,5-diamino-6-hydroxy-4-(5-phosphoribosylamino)-pyrimidine + formate + 2 phosphate + 3 H(+). It functions in the pathway cofactor biosynthesis; riboflavin biosynthesis; 5-amino-6-(D-ribitylamino)uracil from GTP: step 1/4. In terms of biological role, catalyzes the conversion of GTP to 2,5-diamino-6-ribosylamino-4(3H)-pyrimidinone 5'-phosphate (DARP), formate and pyrophosphate. The chain is GTP cyclohydrolase-2 from Helicobacter pylori (strain J99 / ATCC 700824) (Campylobacter pylori J99).